The chain runs to 213 residues: Thymidylate kinase (213 aa).

10–17 (GLEGAGKT) is a binding site for ATP.

Belongs to the thymidylate kinase family.

The catalysed reaction is dTMP + ATP = dTDP + ADP. Its function is as follows. Phosphorylation of dTMP to form dTDP in both de novo and salvage pathways of dTTP synthesis. This Klebsiella pneumoniae subsp. pneumoniae (strain ATCC 700721 / MGH 78578) protein is Thymidylate kinase.